A 210-amino-acid chain; its full sequence is Uracil phosphoribosyltransferase (210 aa).

5-phospho-alpha-D-ribose 1-diphosphate is bound by residues Arg-77, Arg-102, and 129 to 137 (DPMLATGAS). Residues Ile-195 and 200–202 (GDA) contribute to the uracil site. A 5-phospho-alpha-D-ribose 1-diphosphate-binding site is contributed by Asp-201.

This sequence belongs to the UPRTase family. Mg(2+) is required as a cofactor.

The enzyme catalyses UMP + diphosphate = 5-phospho-alpha-D-ribose 1-diphosphate + uracil. It participates in pyrimidine metabolism; UMP biosynthesis via salvage pathway; UMP from uracil: step 1/1. Allosterically activated by GTP. Catalyzes the conversion of uracil and 5-phospho-alpha-D-ribose 1-diphosphate (PRPP) to UMP and diphosphate. This Mycoplasmoides gallisepticum (strain R(low / passage 15 / clone 2)) (Mycoplasma gallisepticum) protein is Uracil phosphoribosyltransferase.